A 933-amino-acid chain; its full sequence is C-1-tetrahydrofolate synthase, cytoplasmic (933 aa).

The segment at 1 to 303 (MWEPQGSLDP…DRLLAPTWPL (303 aa)) is methylenetetrahydrofolate dehydrogenase and cyclohydrolase. Substrate contacts are provided by residues 51–55 (YIRMK) and 98–100 (VQM). NADP(+)-binding positions include 170-172 (GRS) and S195. 270 to 274 (PGGVG) provides a ligand contact to substrate. Residues 304–933 (RPLRITPLSP…TKTGEIEGLF (630 aa)) are formyltetrahydrofolate synthetase. 378-385 (TPLGEGKS) is an ATP binding site.

In the N-terminal section; belongs to the tetrahydrofolate dehydrogenase/cyclohydrolase family. It in the C-terminal section; belongs to the formate--tetrahydrofolate ligase family. Homodimer.

It is found in the cytoplasm. The enzyme catalyses (6R)-5,10-methylene-5,6,7,8-tetrahydrofolate + NADP(+) = (6R)-5,10-methenyltetrahydrofolate + NADPH. It carries out the reaction (6R)-5,10-methenyltetrahydrofolate + H2O = (6R)-10-formyltetrahydrofolate + H(+). It catalyses the reaction (6S)-5,6,7,8-tetrahydrofolate + formate + ATP = (6R)-10-formyltetrahydrofolate + ADP + phosphate. The protein operates within one-carbon metabolism; tetrahydrofolate interconversion. This chain is C-1-tetrahydrofolate synthase, cytoplasmic, found in Spodoptera frugiperda (Fall armyworm).